Reading from the N-terminus, the 457-residue chain is uncharacterized protein (457 aa).

This is an uncharacterized protein from Acanthamoeba polyphaga mimivirus (APMV).